A 176-amino-acid chain; its full sequence is Jacalin-related lectin 19 (176 aa).

One can recognise a Jacalin-type lectin domain in the interval Thr-12–Arg-154.

The protein belongs to the jacalin lectin family.

This Arabidopsis thaliana (Mouse-ear cress) protein is Jacalin-related lectin 19 (JAL19).